The sequence spans 131 residues: D-ribose pyranase (131 aa).

Residue histidine 20 is the Proton donor of the active site. Residues aspartate 28, histidine 98, and phenylalanine 120 to asparagine 122 each bind substrate.

The protein belongs to the RbsD / FucU family. RbsD subfamily. Homodecamer.

It is found in the cytoplasm. The enzyme catalyses beta-D-ribopyranose = beta-D-ribofuranose. It participates in carbohydrate metabolism; D-ribose degradation; D-ribose 5-phosphate from beta-D-ribopyranose: step 1/2. Its function is as follows. Catalyzes the interconversion of beta-pyran and beta-furan forms of D-ribose. This Lactobacillus acidophilus (strain ATCC 700396 / NCK56 / N2 / NCFM) protein is D-ribose pyranase.